The chain runs to 345 residues: 4-hydroxy-2-oxovalerate aldolase (345 aa).

Positions 8–260 constitute a Pyruvate carboxyltransferase domain; it reads ITVHDMTLRD…ETGVDVFKIQ (253 aa). 16-17 contacts substrate; that stretch reads RD. Asp-17 serves as a coordination point for Mn(2+). His-20 functions as the Proton acceptor in the catalytic mechanism. Ser-170 and His-199 together coordinate substrate. The Mn(2+) site is built by His-199 and His-201. A substrate-binding site is contributed by Tyr-290.

The protein belongs to the 4-hydroxy-2-oxovalerate aldolase family.

It carries out the reaction (S)-4-hydroxy-2-oxopentanoate = acetaldehyde + pyruvate. The polypeptide is 4-hydroxy-2-oxovalerate aldolase (Leptothrix cholodnii (strain ATCC 51168 / LMG 8142 / SP-6) (Leptothrix discophora (strain SP-6))).